Here is a 299-residue protein sequence, read N- to C-terminus: MTITFQAVIAKLNEFWAQQGCLIAQPFDTEKGAGTMNPHTFLRAIGPEPWSVAYVEPCRRPTDGRYGENPNRVQHYFQYQVLIKPSPDNIQEVYLDSLRALGIQPEDHDIRFVEDNWESPTLGAWGVGWEVWLDGMEVTQFTYFQQCGGIDCRPVSIEITYGLERLAMYLQNVEAIDQIQWNEKLSYGDIFWQGEVEQCTYNFEASNPDLLFQLFALYEQEAGQLIERGLALPSLEYVLKCSHAFNLLDARGVIAVTERTRYIGRIRNLAREVAHIYLQQREALGFPLDKKVDKPISLV.

Belongs to the class-II aminoacyl-tRNA synthetase family. Tetramer of two alpha and two beta subunits.

It is found in the cytoplasm. The enzyme catalyses tRNA(Gly) + glycine + ATP = glycyl-tRNA(Gly) + AMP + diphosphate. The polypeptide is Glycine--tRNA ligase alpha subunit (glyQ) (Synechocystis sp. (strain ATCC 27184 / PCC 6803 / Kazusa)).